The sequence spans 151 residues: Histone H2A.2.1 (151 aa).

An N-acetylmethionine modification is found at Met1. Disordered stretches follow at residues 1 to 22 (MDGS…KKSV) and 129 to 151 (EKAE…PKKA). 2 consecutive short sequence motifs (SPKK motif) follow at residues 140–143 (SPKK) and 147–150 (SPKK). Residues 140–151 (SPKKTTKSPKKA) are compositionally biased toward basic residues.

Belongs to the histone H2A family. As to quaternary structure, the nucleosome is a histone octamer containing two molecules each of H2A, H2B, H3 and H4 assembled in one H3-H4 heterotetramer and two H2A-H2B heterodimers. The octamer wraps approximately 147 bp of DNA. Phosphorylated within its C-terminal part, probably at the SPKK motifs.

It is found in the nucleus. It localises to the chromosome. Functionally, core component of nucleosome. Nucleosomes wrap and compact DNA into chromatin, limiting DNA accessibility to the cellular machineries which require DNA as a template. Histones thereby play a central role in transcription regulation, DNA repair, DNA replication and chromosomal stability. DNA accessibility is regulated via a complex set of post-translational modifications of histones, also called histone code, and nucleosome remodeling. The polypeptide is Histone H2A.2.1 (Triticum aestivum (Wheat)).